The following is a 135-amino-acid chain: MISIGTDLVHISAFAEQLAQPGSSFMEVFSAGERRKANERQGSRYAEHLAGRWAAKESFIKAWSQAIYGQPPVIAEEAVVWRDIEVRADAWGRVAIELAPELAAVVRESIGEFSSSLSISHDGDYAVATCVLTIQ.

Positions 7 and 57 each coordinate Mg(2+).

It belongs to the P-Pant transferase superfamily. AcpS family. Mg(2+) serves as cofactor.

Its subcellular location is the cytoplasm. The enzyme catalyses apo-[ACP] + CoA = holo-[ACP] + adenosine 3',5'-bisphosphate + H(+). Functionally, transfers the 4'-phosphopantetheine moiety from coenzyme A to a Ser of acyl-carrier-protein. This is Holo-[acyl-carrier-protein] synthase from Corynebacterium glutamicum (strain R).